A 270-amino-acid polypeptide reads, in one-letter code: tRNA pseudouridine synthase A (270 aa).

Residue Asp-60 is the Nucleophile of the active site. Substrate is bound at residue Tyr-118.

The protein belongs to the tRNA pseudouridine synthase TruA family. As to quaternary structure, homodimer.

It carries out the reaction uridine(38/39/40) in tRNA = pseudouridine(38/39/40) in tRNA. Functionally, formation of pseudouridine at positions 38, 39 and 40 in the anticodon stem and loop of transfer RNAs. The sequence is that of tRNA pseudouridine synthase A from Salmonella agona (strain SL483).